We begin with the raw amino-acid sequence, 395 residues long: General transcription factor IIH subunit 2 (395 aa).

In terms of domain architecture, VWFA spans histidine 60–valine 236. Tyrosine 95 is subject to Phosphotyrosine. A C4-type zinc finger spans residues cysteine 291–cysteine 308.

The protein belongs to the GTF2H2 family. In terms of assembly, component of the TFIID-containing RNA polymerase II pre-initiation complex that is composed of TBP and at least GTF2A1, GTF2A2, GTF2E1, GTF2E2, GTF2F1, GTF2H2, GTF2H3, GTF2H4, GTF2H5, GTF2B, TCEA1, ERCC2 and ERCC3. Component of the 7-subunit TFIIH core complex composed of XPB/ERCC3, XPD/ERCC2, GTF2H1, GTF2H2, GTF2H3, GTF2H4 and GTF2H5, which is active in NER. The core complex associates with the 3-subunit CDK-activating kinase (CAK) module composed of CCNH/cyclin H, CDK7 and MNAT1 to form the 10-subunit holoenzyme (holo-TFIIH) active in transcription. Interacts with XPB, XPD, GTF2H1 and GTF2H3.

It localises to the nucleus. Component of the general transcription and DNA repair factor IIH (TFIIH) core complex, which is involved in general and transcription-coupled nucleotide excision repair (NER) of damaged DNA and, when complexed to CAK, in RNA transcription by RNA polymerase II. In NER, TFIIH acts by opening DNA around the lesion to allow the excision of the damaged oligonucleotide and its replacement by a new DNA fragment. In transcription, TFIIH has an essential role in transcription initiation. When the pre-initiation complex (PIC) has been established, TFIIH is required for promoter opening and promoter escape. Phosphorylation of the C-terminal tail (CTD) of the largest subunit of RNA polymerase II by the kinase module CAK controls the initiation of transcription. The N-terminus of GTF2H2 interacts with and regulates XPD whereas an intact C-terminus is required for a successful escape of RNAP II form the promoter. The protein is General transcription factor IIH subunit 2 (GTF2H2) of Bos taurus (Bovine).